Reading from the N-terminus, the 500-residue chain is Putative beta-glucosidase 5 (500 aa).

A signal peptide spans 1–20 (MEQFFALFTIFLSFAFPGRC). A beta-D-glucoside contacts are provided by residues Q43, H140, and 185–186 (NE). E186 functions as the Proton donor in the catalytic mechanism. An intrachain disulfide couples C205 to C212. The N-linked (GlcNAc...) asparagine glycan is linked to N216. Y328 is an a beta-D-glucoside binding site. N361 carries N-linked (GlcNAc...) asparagine glycosylation. Residue E394 coordinates a beta-D-glucoside. Residue E394 is the Nucleophile of the active site. N-linked (GlcNAc...) asparagine glycosylation occurs at N424. A beta-D-glucoside-binding residues include W434 and Y450. 2 N-linked (GlcNAc...) asparagine glycosylation sites follow: N456 and N495.

Belongs to the glycosyl hydrolase 1 family.

The catalysed reaction is Hydrolysis of terminal, non-reducing beta-D-glucosyl residues with release of beta-D-glucose.. This Arabidopsis thaliana (Mouse-ear cress) protein is Putative beta-glucosidase 5.